A 159-amino-acid chain; its full sequence is Ribosomal RNA large subunit methyltransferase H (159 aa).

Residues Leu-76, Gly-108, and 127–132 (FSKMTF) each bind S-adenosyl-L-methionine.

The protein belongs to the RNA methyltransferase RlmH family. As to quaternary structure, homodimer.

The protein resides in the cytoplasm. It catalyses the reaction pseudouridine(1915) in 23S rRNA + S-adenosyl-L-methionine = N(3)-methylpseudouridine(1915) in 23S rRNA + S-adenosyl-L-homocysteine + H(+). Functionally, specifically methylates the pseudouridine at position 1915 (m3Psi1915) in 23S rRNA. The chain is Ribosomal RNA large subunit methyltransferase H from Oceanobacillus iheyensis (strain DSM 14371 / CIP 107618 / JCM 11309 / KCTC 3954 / HTE831).